Here is a 968-residue protein sequence, read N- to C-terminus: Glycine dehydrogenase (decarboxylating) (968 aa).

Lys-712 is subject to N6-(pyridoxal phosphate)lysine.

Belongs to the GcvP family. As to quaternary structure, the glycine cleavage system is composed of four proteins: P, T, L and H. The cofactor is pyridoxal 5'-phosphate.

It carries out the reaction N(6)-[(R)-lipoyl]-L-lysyl-[glycine-cleavage complex H protein] + glycine + H(+) = N(6)-[(R)-S(8)-aminomethyldihydrolipoyl]-L-lysyl-[glycine-cleavage complex H protein] + CO2. Its function is as follows. The glycine cleavage system catalyzes the degradation of glycine. The P protein binds the alpha-amino group of glycine through its pyridoxal phosphate cofactor; CO(2) is released and the remaining methylamine moiety is then transferred to the lipoamide cofactor of the H protein. In Prochlorococcus marinus (strain NATL1A), this protein is Glycine dehydrogenase (decarboxylating).